Here is a 124-residue protein sequence, read N- to C-terminus: MLLYRLDIADFRVWVSIGVSEQERHYPQPVLVSLSLFFKEEPKACSTDKVSDSVCYAELVSLIEEVATNNPCALIERLAKVLLEKIEKALAGQVSRIDLRVSKERPPIPDLLSPVSFSISREVP.

Substrate is bound by residues Glu-23, Tyr-56, and 75–76 (IE). The active-site Proton donor/acceptor is Lys-103.

The protein belongs to the DHNA family.

It carries out the reaction 7,8-dihydroneopterin = 6-hydroxymethyl-7,8-dihydropterin + glycolaldehyde. It functions in the pathway cofactor biosynthesis; tetrahydrofolate biosynthesis; 2-amino-4-hydroxy-6-hydroxymethyl-7,8-dihydropteridine diphosphate from 7,8-dihydroneopterin triphosphate: step 3/4. Its function is as follows. Catalyzes the conversion of 7,8-dihydroneopterin to 6-hydroxymethyl-7,8-dihydropterin. This Chlamydia trachomatis serovar D (strain ATCC VR-885 / DSM 19411 / UW-3/Cx) protein is Probable dihydroneopterin aldolase (folB).